Reading from the N-terminus, the 465-residue chain is Putative F-box protein At1g21990 (465 aa).

The 47-residue stretch at 8–54 (RDLISGSPDEILGKILSFLPTHHAATTSVLSKRWRNLLPLVDKLELT) folds into the F-box domain.

This chain is Putative F-box protein At1g21990, found in Arabidopsis thaliana (Mouse-ear cress).